The sequence spans 150 residues: Large ribosomal subunit protein bL9 (150 aa).

It belongs to the bacterial ribosomal protein bL9 family.

Functionally, binds to the 23S rRNA. The polypeptide is Large ribosomal subunit protein bL9 (Shewanella loihica (strain ATCC BAA-1088 / PV-4)).